A 420-amino-acid chain; its full sequence is DNA repair protein RadA (420 aa).

ATP is bound at residue 62 to 69 (GDPGIGKS). The RadA KNRFG motif signature appears at 218 to 222 (KNRFG). Residues 317–420 (DAYLKSAGGV…IQEVLKKVFA (104 aa)) are lon-protease-like.

The protein belongs to the RecA family. RadA subfamily.

Plays a role in repairing double-strand DNA breaks, probably involving stabilizing or processing branched DNA or blocked replication forks. Required for efficient transformation with chromosomal (linear) DNA, but not for replicative plasmid DNA. Its increased sensitivity to a DNA damaging agent suggests it may be required for DNA repair. The protein is DNA repair protein RadA of Streptococcus pneumoniae (strain ATCC BAA-255 / R6).